We begin with the raw amino-acid sequence, 151 residues long: Large-conductance mechanosensitive channel (151 aa).

Helical transmembrane passes span 12-32 and 71-91; these read GNIV…ALVT and VLLS…FLVV. A disordered region spans residues 122 to 151; it reads AQTNGDSPGRHGGRGTPSPTDGPLASTESQ.

This sequence belongs to the MscL family. Homopentamer.

Its subcellular location is the cell membrane. In terms of biological role, channel that opens in response to stretch forces in the membrane lipid bilayer. May participate in the regulation of osmotic pressure changes within the cell. The protein is Large-conductance mechanosensitive channel of Mycobacterium bovis (strain BCG / Pasteur 1173P2).